Here is a 967-residue protein sequence, read N- to C-terminus: Alanine--tRNA ligase, cytoplasmic (967 aa).

Zn(2+)-binding residues include His-605, His-609, Cys-724, and His-728.

The protein belongs to the class-II aminoacyl-tRNA synthetase family. As to quaternary structure, monomer. Zn(2+) is required as a cofactor. The N-terminus is blocked.

The protein localises to the cytoplasm. It carries out the reaction tRNA(Ala) + L-alanine + ATP = L-alanyl-tRNA(Ala) + AMP + diphosphate. Catalyzes the attachment of alanine to tRNA(Ala) in a two-step reaction: alanine is first activated by ATP to form Ala-AMP and then transferred to the acceptor end of tRNA(Ala). Also edits incorrectly charged tRNA(Ala) via its editing domain. The chain is Alanine--tRNA ligase, cytoplasmic from Bombyx mori (Silk moth).